A 217-amino-acid chain; its full sequence is Somatotropin (217 aa).

Positions 1–26 are cleaved as a signal peptide; that stretch reads MAAGSRTSLLLAFALLCLPWLQEGSA. Histidine 44 is a binding site for Zn(2+). The cysteines at positions 79 and 191 are disulfide-linked. A Phosphoserine modification is found at serine 132. Glutamate 200 serves as a coordination point for Zn(2+). Cysteine 208 and cysteine 215 are disulfide-bonded.

It belongs to the somatotropin/prolactin family.

Its subcellular location is the secreted. Plays an important role in growth control. Its major role in stimulating body growth is to stimulate the liver and other tissues to secrete IGF1. It stimulates both the differentiation and proliferation of myoblasts. It also stimulates amino acid uptake and protein synthesis in muscle and other tissues. The chain is Somatotropin (GH1) from Macaca mulatta (Rhesus macaque).